The chain runs to 464 residues: Argininosuccinate lyase (464 aa).

The protein belongs to the lyase 1 family. Argininosuccinate lyase subfamily.

It localises to the cytoplasm. It catalyses the reaction 2-(N(omega)-L-arginino)succinate = fumarate + L-arginine. The protein operates within amino-acid biosynthesis; L-arginine biosynthesis; L-arginine from L-ornithine and carbamoyl phosphate: step 3/3. The polypeptide is Argininosuccinate lyase (Ectopseudomonas mendocina (strain ymp) (Pseudomonas mendocina)).